Here is a 236-residue protein sequence, read N- to C-terminus: Small ribosomal subunit protein uS3 (236 aa).

The region spanning 39–107 (IREFLTEELK…DTSLNIVEVR (69 aa)) is the KH type-2 domain. Positions 214 to 236 (ASERRAVEGDNQGSSSNRRRENA) are disordered.

It belongs to the universal ribosomal protein uS3 family. In terms of assembly, part of the 30S ribosomal subunit. Forms a tight complex with proteins S10 and S14.

Functionally, binds the lower part of the 30S subunit head. Binds mRNA in the 70S ribosome, positioning it for translation. The protein is Small ribosomal subunit protein uS3 of Brucella suis (strain ATCC 23445 / NCTC 10510).